Consider the following 168-residue polypeptide: Pathogenesis-related protein 1B (168 aa).

The signal sequence occupies residues 1–30; the sequence is MGFFLFSQMPSFFLVSTLLLFLIISHSSHA. Positions 38–156 constitute an SCP domain; sequence LDAHNTARAD…NGGYVVSCNY (119 aa).

This sequence belongs to the CRISP family. Three disulfide bonds are present.

The protein resides in the vacuole. Probably involved in the defense reaction of plants against pathogens. The chain is Pathogenesis-related protein 1B from Nicotiana tabacum (Common tobacco).